Reading from the N-terminus, the 309-residue chain is Sulfate adenylyltransferase subunit 2 (309 aa).

This sequence belongs to the PAPS reductase family. CysD subfamily. As to quaternary structure, heterodimer composed of CysD, the smaller subunit, and CysN.

The enzyme catalyses sulfate + ATP + H(+) = adenosine 5'-phosphosulfate + diphosphate. It participates in sulfur metabolism; hydrogen sulfide biosynthesis; sulfite from sulfate: step 1/3. Its function is as follows. With CysN forms the ATP sulfurylase (ATPS) that catalyzes the adenylation of sulfate producing adenosine 5'-phosphosulfate (APS) and diphosphate, the first enzymatic step in sulfur assimilation pathway. APS synthesis involves the formation of a high-energy phosphoric-sulfuric acid anhydride bond driven by GTP hydrolysis by CysN coupled to ATP hydrolysis by CysD. The protein is Sulfate adenylyltransferase subunit 2 of Aeromonas salmonicida (strain A449).